The following is a 65-amino-acid chain: Large ribosomal subunit protein bL33c (65 aa).

Belongs to the bacterial ribosomal protein bL33 family.

It localises to the plastid. It is found in the chloroplast. This Pyropia yezoensis (Susabi-nori) protein is Large ribosomal subunit protein bL33c.